The following is a 312-amino-acid chain: Aspartate carbamoyltransferase catalytic subunit (312 aa).

Carbamoyl phosphate-binding residues include Arg62 and Thr63. Lys90 is a binding site for L-aspartate. Residues Arg112, His140, and Gln143 each contribute to the carbamoyl phosphate site. L-aspartate is bound by residues Arg173 and Arg228. Carbamoyl phosphate contacts are provided by Gly269 and Pro270.

The protein belongs to the aspartate/ornithine carbamoyltransferase superfamily. ATCase family. In terms of assembly, heterododecamer (2C3:3R2) of six catalytic PyrB chains organized as two trimers (C3), and six regulatory PyrI chains organized as three dimers (R2).

The enzyme catalyses carbamoyl phosphate + L-aspartate = N-carbamoyl-L-aspartate + phosphate + H(+). It functions in the pathway pyrimidine metabolism; UMP biosynthesis via de novo pathway; (S)-dihydroorotate from bicarbonate: step 2/3. Catalyzes the condensation of carbamoyl phosphate and aspartate to form carbamoyl aspartate and inorganic phosphate, the committed step in the de novo pyrimidine nucleotide biosynthesis pathway. This chain is Aspartate carbamoyltransferase catalytic subunit, found in Deinococcus geothermalis (strain DSM 11300 / CIP 105573 / AG-3a).